The sequence spans 252 residues: Vitamin B12 import ATP-binding protein BtuD (252 aa).

An ABC transporter domain is found at 2-237; sequence IQIKSLSVGA…EQLESVFNTQ (236 aa). 30–37 serves as a coordination point for ATP; sequence GPNGSGKS.

The protein belongs to the ABC transporter superfamily. Vitamin B12 importer (TC 3.A.1.13.1) family. In terms of assembly, the complex is composed of two ATP-binding proteins (BtuD), two transmembrane proteins (BtuC) and a solute-binding protein (BtuF).

It localises to the cell inner membrane. It catalyses the reaction an R-cob(III)alamin(out) + ATP + H2O = an R-cob(III)alamin(in) + ADP + phosphate + H(+). In terms of biological role, part of the ABC transporter complex BtuCDF involved in vitamin B12 import. Responsible for energy coupling to the transport system. This chain is Vitamin B12 import ATP-binding protein BtuD, found in Vibrio atlanticus (strain LGP32) (Vibrio splendidus (strain Mel32)).